Consider the following 531-residue polypeptide: Methyl-accepting chemotaxis protein McpN (531 aa).

The Cytoplasmic portion of the chain corresponds to 1-24; it reads MNESVARVFDRILRGLGLKTLNAQ. A helical membrane pass occupies residues 25–45; sequence FLLSYALMFGLAACASVALYL. Residues 46–174 lie on the Periplasmic side of the membrane; the sequence is SMSISPETIN…LMSARADSVQ (129 aa). Residues 52–140 are pilJ-type; that stretch reads ETINVAGAQR…AMLDQVAQPA (89 aa). Positions 54–65 match the N-box motif; it reads INVAGAQRMLSQ. Residue arginine 61 participates in nitrate binding. The helical transmembrane segment at 175-195 threads the bilayer; it reads HTQMWIAFGCLLAILVLVVLG. Residues 196-531 lie on the Cytoplasmic side of the membrane; the sequence is RQFGLAPLMR…LRVVLGRFRT (336 aa). The 54-residue stretch at 201–254 folds into the HAMP domain; the sequence is APLMRQLRGLEVALTEVGAANFTHALAAGHADNEIGRIVAGYERMRQDVSGLLA. Positions 259–495 constitute a Methyl-accepting transducer domain; that stretch reads SAAETDKDVA…DIDRNITNVS (237 aa).

This sequence belongs to the methyl-accepting chemotaxis (MCP) protein family. In terms of assembly, ligand free ligand-binding domain (LBD) is present in a monomer-dimer equilibrium. Nitrate binding to the periplasmic LBD stabilizes the homodimer.

It is found in the cell inner membrane. Its function is as follows. Chemotactic-signal transducers respond to changes in the concentration of attractants and repellents in the environment, transduce a signal from the outside to the inside of the cell, and facilitate sensory adaptation through the variation of the level of methylation. McpN is a chemoreceptor that recognizes specifically nitrate and mediates chemoattraction. Binds nitrate specifically and shows no affinity for other ligands such as nitrite. McpN-mediated taxis occurs only under nitrate starvation conditions. In Pseudomonas aeruginosa (strain ATCC 15692 / DSM 22644 / CIP 104116 / JCM 14847 / LMG 12228 / 1C / PRS 101 / PAO1), this protein is Methyl-accepting chemotaxis protein McpN.